The primary structure comprises 40 residues: Photosystem II reaction center protein J (40 aa).

Residues 8–28 form a helical membrane-spanning segment; the sequence is IPLWLIGTIAGILVIGLVGIF.

Belongs to the PsbJ family. As to quaternary structure, PSII is composed of 1 copy each of membrane proteins PsbA, PsbB, PsbC, PsbD, PsbE, PsbF, PsbH, PsbI, PsbJ, PsbK, PsbL, PsbM, PsbT, PsbX, PsbY, PsbZ, Psb30/Ycf12, at least 3 peripheral proteins of the oxygen-evolving complex and a large number of cofactors. It forms dimeric complexes.

It localises to the plastid. Its subcellular location is the chloroplast thylakoid membrane. In terms of biological role, one of the components of the core complex of photosystem II (PSII). PSII is a light-driven water:plastoquinone oxidoreductase that uses light energy to abstract electrons from H(2)O, generating O(2) and a proton gradient subsequently used for ATP formation. It consists of a core antenna complex that captures photons, and an electron transfer chain that converts photonic excitation into a charge separation. This Anthoceros angustus (Hornwort) protein is Photosystem II reaction center protein J.